The chain runs to 134 residues: Large ribosomal subunit protein bL20 (134 aa).

It belongs to the bacterial ribosomal protein bL20 family.

In terms of biological role, binds directly to 23S ribosomal RNA and is necessary for the in vitro assembly process of the 50S ribosomal subunit. It is not involved in the protein synthesizing functions of that subunit. This Sinorhizobium fredii (strain NBRC 101917 / NGR234) protein is Large ribosomal subunit protein bL20.